A 320-amino-acid polypeptide reads, in one-letter code: Taste receptor type 2 member 109 (320 aa).

Residues 1–14 (MEHFLKSIFDISKN) are Extracellular-facing. A helical transmembrane segment spans residues 15 to 35 (VLPIILFIELIIGIIGNGFMA). The Cytoplasmic segment spans residues 36–62 (LVHCMDWVKRKKMSLVNQILTTLATSR). The helical transmembrane segment at 63 to 83 (ICLLWFMLLGLLITLLDPDLA) threads the bilayer. The Extracellular segment spans residues 84–94 (SARMMIQVASN). Residues 95–115 (LWIIANHMSIWLATCLTVFYF) form a helical membrane-spanning segment. At 116–135 (LKIANFSSSLFLYLKWRVEK) the chain is on the cytoplasmic side. A helical membrane pass occupies residues 136 to 156 (VISVIFLVSLVLLFLNMLLMN). At 157 to 191 (LENDMCIAEYHQINISYSFIYHYRADCERRVLRLH) the chain is on the extracellular side. Asn170 is a glycosylation site (N-linked (GlcNAc...) asparagine). The chain crosses the membrane as a helical span at residues 192–212 (IIILSVPFVLSLPTFLLLIFS). The Cytoplasmic segment spans residues 213–240 (LWTHHKKMQQHVQGRRDASTTAHFKALQ). A helical transmembrane segment spans residues 241-261 (TVIAFLLLYCIFILSMLLQFW). At 262 to 270 (KYELMKKPL) the chain is on the extracellular side. A helical transmembrane segment spans residues 271–291 (FILFCHIVYGAFPSFHSYVLI). Over 292–320 (LGDMKLRQASLSVLLWLKCRPNYIETLDL) the chain is Cytoplasmic.

The protein belongs to the G-protein coupled receptor T2R family.

Its subcellular location is the membrane. Its function is as follows. Putative taste receptor which may play a role in the perception of bitterness. The chain is Taste receptor type 2 member 109 from Rattus norvegicus (Rat).